The chain runs to 512 residues: Maturase K (512 aa).

It belongs to the intron maturase 2 family. MatK subfamily.

The protein localises to the plastid. The protein resides in the chloroplast. In terms of biological role, usually encoded in the trnK tRNA gene intron. Probably assists in splicing its own and other chloroplast group II introns. The sequence is that of Maturase K from Oenothera argillicola (Appalachian evening primrose).